A 201-amino-acid chain; its full sequence is FMN-dependent NADH:quinone oxidoreductase (201 aa).

Residues 92-95 (MWNL) and 136-139 (STGG) each bind FMN.

The protein belongs to the azoreductase type 1 family. In terms of assembly, homodimer. FMN is required as a cofactor.

The catalysed reaction is 2 a quinone + NADH + H(+) = 2 a 1,4-benzosemiquinone + NAD(+). The enzyme catalyses N,N-dimethyl-1,4-phenylenediamine + anthranilate + 2 NAD(+) = 2-(4-dimethylaminophenyl)diazenylbenzoate + 2 NADH + 2 H(+). Its function is as follows. Quinone reductase that provides resistance to thiol-specific stress caused by electrophilic quinones. Also exhibits azoreductase activity. Catalyzes the reductive cleavage of the azo bond in aromatic azo compounds to the corresponding amines. This Coprothermobacter proteolyticus (strain ATCC 35245 / DSM 5265 / OCM 4 / BT) protein is FMN-dependent NADH:quinone oxidoreductase.